Here is a 428-residue protein sequence, read N- to C-terminus: Tyrosine--tRNA ligase (428 aa).

L-tyrosine is bound at residue Tyr41. A 'HIGH' region motif is present at residues 46–55; the sequence is PTADSLHLGH. L-tyrosine-binding residues include Tyr179 and Gln183. Residues 239 to 243 carry the 'KMSKS' region motif; it reads KFGKT. Residue Lys242 coordinates ATP. An S4 RNA-binding domain is found at 361–418; the sequence is ADLMQALVDAELQPSRGQARKTIASNAVTINGEKQSDPEYIFNDEDRLFGRYTLLRRG.

This sequence belongs to the class-I aminoacyl-tRNA synthetase family. TyrS type 1 subfamily. In terms of assembly, homodimer.

It localises to the cytoplasm. The enzyme catalyses tRNA(Tyr) + L-tyrosine + ATP = L-tyrosyl-tRNA(Tyr) + AMP + diphosphate + H(+). Catalyzes the attachment of tyrosine to tRNA(Tyr) in a two-step reaction: tyrosine is first activated by ATP to form Tyr-AMP and then transferred to the acceptor end of tRNA(Tyr). The polypeptide is Tyrosine--tRNA ligase (Salmonella paratyphi C (strain RKS4594)).